The sequence spans 140 residues: Putative pre-16S rRNA nuclease (140 aa).

Belongs to the YqgF nuclease family.

Its subcellular location is the cytoplasm. Could be a nuclease involved in processing of the 5'-end of pre-16S rRNA. In Vibrio vulnificus (strain CMCP6), this protein is Putative pre-16S rRNA nuclease.